Consider the following 312-residue polypeptide: Olfactory receptor 13J1 (312 aa).

At 1 to 25 the chain is on the extracellular side; the sequence is MEPLNRTEVSEFFLKGFSGYPALEH. A glycan (N-linked (GlcNAc...) asparagine) is linked at asparagine 5. A helical membrane pass occupies residues 26-46; it reads LLFPLCSAMYLVTLLGNTAIM. Residues 47-54 are Cytoplasmic-facing; sequence AVSVLDIH. A helical membrane pass occupies residues 55-75; it reads LHTPVYFFLGNLSTLDICYTP. Topologically, residues 76–99 are extracellular; it reads TFVPLMLVHLLSSRKTISFAVCAI. A disulfide bridge connects residues cysteine 97 and cysteine 189. Residues 100–120 traverse the membrane as a helical segment; that stretch reads QMCLSLSTGSTECLLLAITAY. Residues 121 to 139 are Cytoplasmic-facing; the sequence is DRYLAICQPLRYHVLMSHR. The helical transmembrane segment at 140-160 threads the bilayer; that stretch reads LCVLLMGAAWVLCLLKSVTEM. Over 161–197 the chain is Extracellular; that stretch reads VISMRLPFCGHHVVSHFTCKILAVLKLACGNTSVSED. The N-linked (GlcNAc...) asparagine glycan is linked to asparagine 191. The chain crosses the membrane as a helical span at residues 198–217; that stretch reads FLLAGSILLLPVPLAFICLS. The Cytoplasmic portion of the chain corresponds to 218 to 237; the sequence is YLLILATILRVPSAARCCKA. The chain crosses the membrane as a helical span at residues 238 to 258; it reads FSTCLAHLAVVLLFYGTIIFM. At 259–271 the chain is on the extracellular side; that stretch reads YLKPKSKEAHISD. A helical transmembrane segment spans residues 272–292; that stretch reads EVFTVLYAMVTTMLNPTIYSL. Residues 293 to 312 lie on the Cytoplasmic side of the membrane; it reads RNKEVKEAARKVWGRSRASR.

The protein belongs to the G-protein coupled receptor 1 family.

It is found in the cell membrane. Odorant receptor. The polypeptide is Olfactory receptor 13J1 (OR13J1) (Homo sapiens (Human)).